A 452-amino-acid chain; its full sequence is MYSINEVLETIRMVQEENLDIRTITMGISLRDCADANAAKACQRIYDKITTQAANLVKAGEEIEREYGIPIINKRISVTPISLVAESSDANNYTPFAEAMDRAAKEVGVNFIGGFSALVHKGFTKGDRILINSIPEALATTERVCSSVNVGSTKDGINMDAVYRMGQVVKECAERTADKDGLACAKLVVFCNVPEDNPFMAGAFHGIGEAECVINVGVSGPGVVKNAVEKVKGTDFGTLAETVKKTAFKITRMGELVGRAAAKKLGVPFGIVDLSLAPTPAVGDSVAEVLEAMGLECCGTHGTTAALALLNDAVKKGGAMASSYVGGLSGAFIPLSEDAGMIRAAECGILTLEKLEAMTCVCSVGLDMIAIPGDTTAETLAAIIADEMAIGMVNFKTTAVRIIPAPGKTVGDRVEFGGLLGHAPIIPVKQAGAQEFVTRGGRIPAPIQSLKN.

The protein belongs to the UPF0210 family. As to quaternary structure, homodimer.

The sequence is that of UPF0210 protein Dred_1672 from Desulforamulus reducens (strain ATCC BAA-1160 / DSM 100696 / MI-1) (Desulfotomaculum reducens).